We begin with the raw amino-acid sequence, 323 residues long: Beta-ketoacyl-[acyl-carrier-protein] synthase III (323 aa).

Residues Cys114 and His250 contribute to the active site. The tract at residues 251–255 (QANLR) is ACP-binding. Residue Asn280 is part of the active site.

It belongs to the thiolase-like superfamily. FabH family. Homodimer.

Its subcellular location is the cytoplasm. It carries out the reaction malonyl-[ACP] + acetyl-CoA + H(+) = 3-oxobutanoyl-[ACP] + CO2 + CoA. It participates in lipid metabolism; fatty acid biosynthesis. Its function is as follows. Catalyzes the condensation reaction of fatty acid synthesis by the addition to an acyl acceptor of two carbons from malonyl-ACP. Catalyzes the first condensation reaction which initiates fatty acid synthesis and may therefore play a role in governing the total rate of fatty acid production. Possesses both acetoacetyl-ACP synthase and acetyl transacylase activities. Its substrate specificity determines the biosynthesis of branched-chain and/or straight-chain of fatty acids. This is Beta-ketoacyl-[acyl-carrier-protein] synthase III from Cereibacter sphaeroides (strain ATCC 17029 / ATH 2.4.9) (Rhodobacter sphaeroides).